Here is a 231-residue protein sequence, read N- to C-terminus: Ribosyldihydronicotinamide dehydrogenase [quinone] (231 aa).

Residues His-12, 18 to 21 (FNGS), and 104 to 107 (LYWF) each bind FAD. Residue 127-129 (FDV) participates in substrate binding. Residues 148–151 (TTGG) and Tyr-156 contribute to the FAD site. His-174 and His-178 together coordinate Zn(2+). Glu-194 lines the FAD pocket. Ser-197 carries the phosphoserine modification. Arg-201 is a binding site for FAD. Cys-223 contacts Zn(2+).

This sequence belongs to the NAD(P)H dehydrogenase (quinone) family. As to quaternary structure, homodimer. Zn(2+) serves as cofactor. The cofactor is FAD.

It localises to the cytoplasm. It catalyses the reaction 1-(beta-D-ribofuranosyl)-1,4-dihydronicotinamide + a quinone + H(+) = beta-nicotinamide D-riboside + a quinol. Its function is as follows. The enzyme apparently serves as a quinone reductase in connection with conjugation reactions of hydroquinones involved in detoxification pathways as well as in biosynthetic processes such as the vitamin K-dependent gamma-carboxylation of glutamate residues in prothrombin synthesis. This is Ribosyldihydronicotinamide dehydrogenase [quinone] (Nqo2) from Rattus norvegicus (Rat).